The primary structure comprises 118 residues: Late cornified envelope protein 5A (118 aa).

Residues 1–10 (MSCQQSQQQC) are compositionally biased toward low complexity. 2 disordered regions span residues 1–32 (MSCQ…PPKC) and 72–118 (HRPR…GGCC). Over residues 11–32 (QPPPKCTPKCPPKCTPKCPPKC) the composition is skewed to pro residues. Residues 72-82 (HRPRQSLRRRP) are compositionally biased toward basic residues. Low complexity predominate over residues 97 to 118 (GGSSCCHSSGGSGCCHSSGGCC).

It belongs to the LCE family. As to quaternary structure, interacts with CYSRT1; the interaction is direct. In terms of tissue distribution, skin-specific. Expression was readily detected in adult trunk skin, adult arm skin, fetal skin, penal skin, vulva, esophagus and tongue. Not expressed in the cervix, rectum, lung, colon, or placenta. Expression is observed in the heart.

Functionally, precursors of the cornified envelope of the stratum corneum. This is Late cornified envelope protein 5A (LCE5A) from Homo sapiens (Human).